Consider the following 809-residue polypeptide: MRRALRLLPLPLSIAICLPAMAADKPLNWGLCPAVDPLPGFDGAPAADPKAAEMRQQLPTDIEGDQLSGTSTTPQYQGNVALKRGDQFLGADNLRMDTETGNYIAEGNVRYQDTSFRMVADRAEGNQDTDTHKVTNIQYQLVERRGNGDAESVDLQGQVGQMHRSTYTTCDPSQPIWRVRAPEIDVDNEEGFGTARNAVLQIGKVPVLYFPWFKFPIDDRRQTGLLFPQFGLSGRNGFDYLQPIYLNLAPNYDATLLPRYMSKRGFMFGTEFRYLYEGGRGEVTGNYLPNDKLRDKDRGSVFYSGYHNVNSNWQARSSISWVSDTRYVEDFTSRINGMGSASSLQSTVGIYGTGETWTAGLMADRWQLTDYTLDEQALPYNRQPRAYFTWEKPLGIFEAGIYAEAVRFTHDDSYFVRPPISGSSRDDNEDEYVRTNIRNKQYGSGARLDVKPYISMPLSGAAWFLTPTVAWRYTAYQLDSTLADTAPLTGNRTPTRSLPIASLDAGLYFDRETSLFGTNYLNTLEPRMYYLYVPYRDQDDLPVFDTRPFTFSYGQLFRDTRYTGADRQNDANQLTLAVTSRWLRQDDGREKLSLSAGQILYFSDSLVTINNSNNSAAGSEQTVEQGKSAWVADANYMINDRWSMGATYQWNPNSRKEDLASLRTRYLLNNDGIINLAYRYRRNLTDNSDQLKQADFSFLYPINPSWSAVGRYYYSLLDRKPLEIIGGVQWDSCCLAVRGLVRRFVRNRDGEMDNSIQIEFVLKGLSSFGQNTDRTLRRAILGYYRDDLYLVPPSNTTTNPDDYDPNLIP.

The first 22 residues, 1–22 (MRRALRLLPLPLSIAICLPAMA), serve as a signal peptide directing secretion.

It belongs to the LptD family. Component of the lipopolysaccharide transport and assembly complex. Interacts with LptE and LptA.

It is found in the cell outer membrane. Its function is as follows. Together with LptE, is involved in the assembly of lipopolysaccharide (LPS) at the surface of the outer membrane. This Xanthomonas euvesicatoria pv. vesicatoria (strain 85-10) (Xanthomonas campestris pv. vesicatoria) protein is LPS-assembly protein LptD.